Reading from the N-terminus, the 548-residue chain is MKKVTAMLFSMAVGLNAVSMAAKAKASEEQETDVLLIGGGIMSATLGTYLRELEPEWSMTMVERLEGVAQESSNGWNNAGTGHSALMELNYTPQNADGSISIEKAVAINEAFQISRQFWAHQVERGVLRTPRSFINTVPHMSFVWGEDNVNFLRARYAALQQSSLFRGMRYSEDHAQIKEWAPLVMEGRDPQQKVAATRTEIGTDVNYGEITRQLIASLQKKSNFSLQLSSEVRALKRNDDNTWTVTVADLKNGTAQNIRAKFVFIGAGGAALKLLQESGIPEAKDYAGFPVGGQFLVSENPDVVNHHLAKVYGKASVGAPPMSVPHIDTRVLDGKRVVLFGPFATFSTKFLKNGSLWDLMSSTTTSNVMPMMHVGLDNFDLVKYLVSQVMLSEEDRFEALKEYYPQAKKEDWRLWQAGQRVQIIKRDAEKGGVLRLGTEVVSDQQGTIAALLGASPGASTAAPIMLDLLEKVFGDRVSSPQWQATLKAIVPSYGRKLNGDVAATERELQYTSEVLGLKYDKPQAADSTPKPQLKPQPVQKEVADIAL.

A disordered region spans residues 521–548 (DKPQAADSTPKPQLKPQPVQKEVADIAL). Residues 530 to 541 (PKPQLKPQPVQK) are compositionally biased toward low complexity.

Belongs to the MQO family. Requires FAD as cofactor.

It carries out the reaction (S)-malate + a quinone = a quinol + oxaloacetate. It functions in the pathway carbohydrate metabolism; tricarboxylic acid cycle; oxaloacetate from (S)-malate (quinone route): step 1/1. The polypeptide is Probable malate:quinone oxidoreductase (Escherichia coli O139:H28 (strain E24377A / ETEC)).